Here is a 631-residue protein sequence, read N- to C-terminus: Integrator complex subunit 10 (631 aa).

Polar residues predominate over residues 545–570 (FELTSSPNSSGTPTATTVAGGSQSRR). The interval 545-577 (FELTSSPNSSGTPTATTVAGGSQSRRIGTRGAD) is disordered.

The protein belongs to the Integrator subunit 10 family. In terms of assembly, belongs to the multiprotein complex Integrator, at least composed of IntS1, IntS2, IntS3, IntS4, omd/IntS5, IntS6, defl/IntS7, IntS8, IntS9, IntS10, IntS11, IntS12, asun/IntS13, IntS14 and IntS15. The core complex associates with protein phosphatase 2A subunits mts/PP2A and Pp2A-29B, to form the Integrator-PP2A (INTAC) complex.

It is found in the nucleus. Functionally, component of the integrator complex, a multiprotein complex that terminates RNA polymerase II (Pol II) transcription in the promoter-proximal region of genes. The integrator complex provides a quality checkpoint during transcription elongation by driving premature transcription termination of transcripts that are unfavorably configured for transcriptional elongation: the complex terminates transcription by (1) catalyzing dephosphorylation of the C-terminal domain (CTD) of Pol II subunit Polr2A/Rbp1 and Spt5, and (2) degrading the exiting nascent RNA transcript via endonuclease activity. The integrator complex is also involved in the 3'-end processing of the U7 snRNA, and also the spliceosomal snRNAs U1, U2, U4 and U5. The sequence is that of Integrator complex subunit 10 from Drosophila melanogaster (Fruit fly).